Here is a 381-residue protein sequence, read N- to C-terminus: Homoserine O-succinyltransferase (381 aa).

The AB hydrolase-1 domain maps to 45 to 360 (NAVLVCHALN…PHGHDAFLLD (316 aa)). Ser151 serves as the catalytic Nucleophile. Residue Arg221 coordinates substrate. Residues Asp321 and His354 contribute to the active site. Residue Asp355 coordinates substrate.

It belongs to the AB hydrolase superfamily. MetX family. In terms of assembly, homodimer.

It localises to the cytoplasm. The catalysed reaction is L-homoserine + succinyl-CoA = O-succinyl-L-homoserine + CoA. It functions in the pathway amino-acid biosynthesis; L-methionine biosynthesis via de novo pathway; O-succinyl-L-homoserine from L-homoserine: step 1/1. In terms of biological role, transfers a succinyl group from succinyl-CoA to L-homoserine, forming succinyl-L-homoserine. The sequence is that of Homoserine O-succinyltransferase from Burkholderia ambifaria (strain ATCC BAA-244 / DSM 16087 / CCUG 44356 / LMG 19182 / AMMD) (Burkholderia cepacia (strain AMMD)).